The sequence spans 586 residues: Capsid scaffolding protein (586 aa).

Active-site charge relay system residues include His-53, Ser-123, and His-142. Residues 251 to 263 show a composition bias toward basic and acidic residues; it reads SEETPENAIKDRS. Disordered stretches follow at residues 251-288, 330-364, 458-486, and 530-586; these read SEETPENAIKDRSVSTQTAPSFDISESQQPSGQTHVPA, ARRDNDRRPVSPSREFSRRSRDSTHECSPGRDIWP, NKRDSEYSENNPRKRSARTISENDPYFPG, and SASN…MMAD. Residues 264-284 show a composition bias toward polar residues; the sequence is VSTQTAPSFDISESQQPSGQT. An interaction with pAP region spans residues 312 to 331; that stretch reads EDMVYVPFEKYASLLAASAR. 2 interaction with major capsid protein regions span residues 566–586 and 567–586; these read DAQTKLKRKKEAAAFAQMMAD and AQTKLKRKKEAAAFAQMMAD.

The protein belongs to the herpesviridae capsid scaffolding protein family. In terms of assembly, homomultimer. Interacts with major capsid protein. Exists in a monomer-dimer equilibrium with the dimer being the active species. In terms of processing, capsid scaffolding protein is cleaved by assemblin after formation of the spherical procapsid. As a result, the capsid obtains its mature, icosahedral shape. Cleavages occur at two or more sites: release (R-site) and maturation (M-site).

Its subcellular location is the host cytoplasm. It localises to the host nucleus. It carries out the reaction Cleaves -Ala-|-Ser- and -Ala-|-Ala- bonds in the scaffold protein.. Functionally, acts as a scaffold protein by binding major capsid protein in the cytoplasm, inducing the nuclear localization of both proteins. Multimerizes in the nucleus such as major capsid protein forms the icosahedral T=16 capsid. Autocatalytic cleavage releases the assembly protein, and subsequently abolishes interaction with major capsid protein. Cleavages products are evicted from the capsid before or during DNA packaging. Protease that plays an essential role in virion assembly within the nucleus. Catalyzes the cleavage of the assembly protein after formation of the spherical procapsid. By that cleavage, the capsid matures and gains its icosahedral shape. The cleavage sites seem to include -Ala-Ser-, -Ala-Ala-, as well as Ala-Thr bonds. Assemblin and cleavages products are evicted from the capsid before or during DNA packaging. In terms of biological role, plays a major role in capsid assembly. Acts as a scaffold protein by binding major capsid protein. Multimerizes in the nucleus such as major capsid protein forms the icosahedral T=16 capsid. Cleaved by assemblin after capsid completion. The cleavages products are evicted from the capsid before or during DNA packaging. In Gallus gallus (Chicken), this protein is Capsid scaffolding protein.